A 131-amino-acid polypeptide reads, in one-letter code: Leptin receptor overlapping transcript-like 1 (131 aa).

4 helical membrane-spanning segments follow: residues 7–27 (LISLSFGGAIGLMFLMLGCAL), 32–52 (QYWPLFVLFFYILSPIPYCIA), 69–89 (LAIFLTTGVVVSAFGLPVVFA), and 100–120 (ALVLTGNTVIFATILGFFLVF).

This sequence belongs to the OB-RGRP/VPS55 family. Interacts with RAB13.

It localises to the membrane. Functionally, negatively regulates growth hormone (GH) receptor cell surface expression in liver. May play a role in liver resistance to GH during periods of reduced nutrient availability. The protein is Leptin receptor overlapping transcript-like 1 (Leprotl1) of Rattus norvegicus (Rat).